The following is a 210-amino-acid chain: ATP-dependent Clp protease proteolytic subunit (210 aa).

The active-site Nucleophile is S106. The active site involves H131.

Belongs to the peptidase S14 family. As to quaternary structure, fourteen ClpP subunits assemble into 2 heptameric rings which stack back to back to give a disk-like structure with a central cavity, resembling the structure of eukaryotic proteasomes.

Its subcellular location is the cytoplasm. The catalysed reaction is Hydrolysis of proteins to small peptides in the presence of ATP and magnesium. alpha-casein is the usual test substrate. In the absence of ATP, only oligopeptides shorter than five residues are hydrolyzed (such as succinyl-Leu-Tyr-|-NHMec, and Leu-Tyr-Leu-|-Tyr-Trp, in which cleavage of the -Tyr-|-Leu- and -Tyr-|-Trp bonds also occurs).. Cleaves peptides in various proteins in a process that requires ATP hydrolysis. Has a chymotrypsin-like activity. Plays a major role in the degradation of misfolded proteins. This chain is ATP-dependent Clp protease proteolytic subunit, found in Bradyrhizobium sp. (strain BTAi1 / ATCC BAA-1182).